A 487-amino-acid chain; its full sequence is ATP-dependent RNA helicase DBP3 (487 aa).

The disordered stretch occupies residues 1–40 (MAKRSRNMESNSERSSRPKKKSKGDAKPEQPPYVQSAELD). The short motif at 71–98 (TAFSYLPSDSNQLYGPLEHFSKPTPIQS) is the Q motif element. Residues 101 to 276 (WPYLFAGRDV…TTFMKEPVTV (176 aa)) form the Helicase ATP-binding domain. Residue 114-121 (AETGSGKT) coordinates ATP. Positions 222-225 (DEAD) match the DEAD box motif. The Helicase C-terminal domain maps to 291–456 (RIKQIVEVVK…DIPEALLKFG (166 aa)).

It belongs to the DEAD box helicase family. DDX5/DBP2 subfamily.

The protein localises to the nucleus. The protein resides in the nucleolus. It catalyses the reaction ATP + H2O = ADP + phosphate + H(+). Its function is as follows. ATP-dependent RNA helicase required for 60S ribosomal subunit synthesis. Involved in efficient pre-rRNA processing, predominantly at site A3, which is necessary for the normal formation of 25S and 5.8S rRNAs. The polypeptide is ATP-dependent RNA helicase DBP3 (DBP3) (Ajellomyces capsulatus (strain NAm1 / WU24) (Darling's disease fungus)).